Reading from the N-terminus, the 743-residue chain is FHF complex subunit HOOK-interacting protein 2B (743 aa).

The tract at residues 186 to 219 (CGEPTALPKDTTSHGDKDCSHDGAPARPQLDGES) is disordered. The segment covering 196–206 (TTSHGDKDCSH) has biased composition (basic and acidic residues).

This sequence belongs to the FHIP family. As to expression, expressed in liver.

Functionally, able to activate MAPK/ERK and TGFB signaling pathways. May regulate the activity of genes involved in intestinal barrier function and immunoprotective inflammation. May play a role in cell proliferation. This Homo sapiens (Human) protein is FHF complex subunit HOOK-interacting protein 2B.